Consider the following 568-residue polypeptide: Urease subunit alpha (568 aa).

Positions 133 to 568 (GGVDTHIHFI…LPLAQKYFLF (436 aa)) constitute a Urease domain. Residues His138, His140, and Lys221 each contribute to the Ni(2+) site. Position 221 is an N6-carboxylysine (Lys221). Position 223 (His223) interacts with substrate. The Ni(2+) site is built by His250 and His276. Residue His324 is the Proton donor of the active site. Position 364 (Asp364) interacts with Ni(2+).

It belongs to the metallo-dependent hydrolases superfamily. Urease alpha subunit family. As to quaternary structure, heterohexamer of 3 UreC (alpha) and 3 UreAB (gamma/beta) subunits. Ni cation serves as cofactor. Carboxylation allows a single lysine to coordinate two nickel ions.

It localises to the cytoplasm. The catalysed reaction is urea + 2 H2O + H(+) = hydrogencarbonate + 2 NH4(+). The protein operates within nitrogen metabolism; urea degradation; CO(2) and NH(3) from urea (urease route): step 1/1. This is Urease subunit alpha from Deinococcus radiodurans (strain ATCC 13939 / DSM 20539 / JCM 16871 / CCUG 27074 / LMG 4051 / NBRC 15346 / NCIMB 9279 / VKM B-1422 / R1).